A 493-amino-acid chain; its full sequence is ATP synthase subunit beta, chloroplastic (493 aa).

An ATP-binding site is contributed by 170 to 177 (GGAGVGKT).

This sequence belongs to the ATPase alpha/beta chains family. As to quaternary structure, F-type ATPases have 2 components, CF(1) - the catalytic core - and CF(0) - the membrane proton channel. CF(1) has five subunits: alpha(3), beta(3), gamma(1), delta(1), epsilon(1). CF(0) has four main subunits: a(1), b(1), b'(1) and c(9-12).

Its subcellular location is the plastid. The protein localises to the chloroplast thylakoid membrane. It carries out the reaction ATP + H2O + 4 H(+)(in) = ADP + phosphate + 5 H(+)(out). Functionally, produces ATP from ADP in the presence of a proton gradient across the membrane. The catalytic sites are hosted primarily by the beta subunits. This Lachenalia pusilla (Cape cowslips) protein is ATP synthase subunit beta, chloroplastic.